A 1358-amino-acid polypeptide reads, in one-letter code: DNA-directed RNA polymerase subunit beta (1358 aa).

The span at Q1033–G1051 shows a compositional bias: basic and acidic residues. The interval Q1033–L1053 is disordered.

The protein belongs to the RNA polymerase beta chain family. As to quaternary structure, the RNAP catalytic core consists of 2 alpha, 1 beta, 1 beta' and 1 omega subunit. When a sigma factor is associated with the core the holoenzyme is formed, which can initiate transcription.

It carries out the reaction RNA(n) + a ribonucleoside 5'-triphosphate = RNA(n+1) + diphosphate. DNA-dependent RNA polymerase catalyzes the transcription of DNA into RNA using the four ribonucleoside triphosphates as substrates. The chain is DNA-directed RNA polymerase subunit beta from Marinobacter nauticus (strain ATCC 700491 / DSM 11845 / VT8) (Marinobacter aquaeolei).